The sequence spans 660 residues: Peroxisomal acyl-coenzyme A oxidase 1 (660 aa).

A Phosphoserine modification is found at Ser26. N6-succinyllysine is present on residues Lys89 and Lys90. FAD-binding residues include Thr139 and Gly178. The residue at position 216 (Lys216) is an N6-acetyllysine. Lys241 carries the post-translational modification N6-succinyllysine. N6-acetyllysine is present on residues Lys255, Lys267, and Lys272. Residue Lys349 is modified to N6-succinyllysine. Residue Glu421 is the Proton acceptor of the active site. Lys437 and Lys446 each carry N6-acetyllysine; alternate. Residues Lys437 and Lys446 each carry the N6-succinyllysine; alternate modification. N6-acetyllysine is present on residues Lys500 and Lys504. Lys512 is subject to N6-acetyllysine; alternate. Lys512 is subject to N6-succinyllysine; alternate. Position 542 is an N6-succinyllysine (Lys542). Lys637 carries the N6-acetyllysine; alternate modification. Lys637 carries the N6-succinyllysine; alternate modification. An N6-succinyllysine modification is found at Lys643. Position 649 is a phosphoserine (Ser649). An N6-acetyllysine modification is found at Lys651. N6-succinyllysine is present on Lys654. The Microbody targeting signal motif lies at Ser658–Leu660.

It belongs to the acyl-CoA oxidase family. As to quaternary structure, homodimer. Interacts with LONP2. FAD serves as cofactor. As to expression, widely expressed with highest levels of isoform 1 and isoform 2 detected in testis. Isoform 1 is expressed at higher levels than isoform 2 in liver and kidney while isoform 2 levels are higher in brain, lung, muscle, white adipose tissue and testis. Levels are almost equal in heart.

The protein localises to the peroxisome. The enzyme catalyses a 2,3-saturated acyl-CoA + O2 = a (2E)-enoyl-CoA + H2O2. It catalyses the reaction hexadecanoyl-CoA + O2 = (2E)-hexadecenoyl-CoA + H2O2. It carries out the reaction dodecanoyl-CoA + O2 = (2E)-dodecenoyl-CoA + H2O2. The catalysed reaction is octanoyl-CoA + O2 = (2E)-octenoyl-CoA + H2O2. The enzyme catalyses decanoyl-CoA + O2 = (2E)-decenoyl-CoA + H2O2. It catalyses the reaction tetradecanoyl-CoA + O2 = (2E)-tetradecenoyl-CoA + H2O2. It carries out the reaction hexadecanedioyl-CoA + O2 = (2E)-hexadecenedioyl-CoA + H2O2. The catalysed reaction is (5Z,8Z,11Z,14Z,17Z)-eicosapentaenoyl-CoA + O2 = (2E,5Z,8Z,11Z,14Z,17Z)-icosahexaenoyl-CoA + H2O2. The enzyme catalyses tetracosanoyl-CoA + O2 = (2E)-tetracosenoyl-CoA + H2O2. It catalyses the reaction glutaryl-CoA + O2 = (2E)-glutaconyl-CoA + H2O2. It carries out the reaction hexanoyl-CoA + O2 = (2E)-hexenoyl-CoA + H2O2. The catalysed reaction is octadecanoyl-CoA + O2 = (2E)-octadecenoyl-CoA + H2O2. The enzyme catalyses (6Z,9Z,12Z,15Z,18Z,21Z)-tetracosahexaenoyl-CoA + O2 = (2E,6Z,9Z,12Z,15Z,18Z,21Z)-tetracosaheptaenoyl-CoA + H2O2. It functions in the pathway lipid metabolism; peroxisomal fatty acid beta-oxidation. In terms of biological role, involved in the initial and rate-limiting step of peroxisomal beta-oxidation of straight-chain saturated and unsaturated very-long-chain fatty acids. Catalyzes the desaturation of fatty acyl-CoAs such as palmitoyl-CoA (hexadecanoyl-CoA) to 2-trans-enoyl-CoAs ((2E)-enoyl-CoAs) such as (2E)-hexadecenoyl-CoA, and donates electrons directly to molecular oxygen (O(2)), thereby producing hydrogen peroxide (H(2)O(2)). Shows highest activity against medium-chain fatty acyl-CoAs. Shows optimum activity with a chain length of 10 carbons (decanoyl-CoA) in vitro. Its function is as follows. Is active against a much broader range of substrates and shows activity towards long-chain fatty acyl-CoAs. This Homo sapiens (Human) protein is Peroxisomal acyl-coenzyme A oxidase 1.